The sequence spans 368 residues: MRLDSISIANFRNHTLLEFEPGHSVTNIYGRNGSGKTSILEAIHYCALTRGFSGNNDREYLKFGEELFTIRSSFTSGQGIATKVSVAYSPKREKRILVNEQELQTFSSHIGTIPCVTFTPREMVIINGAPAERRRFIDTAICQYDRKYLSDLLLYRRILQQRNALLSSEQDPRFIDSALDVLTDQLVATATEIVLVRKRFIEHFTSMLGDVYQWIPEGAEPSILYQSSLGHHENLYEKDKIQQVFRERFETLKQQELQRRQTLAGPHRDDLQFYLNKREIRKYASQGQQRAFLVAMKMTLQGYLYEASGEIPITLLDDLFSELDEVVSGTMVETLATKGQVIITSTGKKEGKGISCFSVDDYKSSEEP.

Residue 30 to 37 (GRNGSGKT) coordinates ATP.

This sequence belongs to the RecF family.

It is found in the cytoplasm. Its function is as follows. The RecF protein is involved in DNA metabolism; it is required for DNA replication and normal SOS inducibility. RecF binds preferentially to single-stranded, linear DNA. It also seems to bind ATP. This chain is DNA replication and repair protein RecF, found in Chlorobaculum parvum (strain DSM 263 / NCIMB 8327) (Chlorobium vibrioforme subsp. thiosulfatophilum).